Consider the following 63-residue polypeptide: U7-theraphotoxin-Cg1a (63 aa).

The N-terminal stretch at 1–21 (MKTSILFVIFGLALLFALSVA) is a signal peptide. The propeptide occupies 22–31 (IEMEEEETDR). 3 cysteine pairs are disulfide-bonded: cysteine 33/cysteine 47, cysteine 40/cysteine 52, and cysteine 46/cysteine 59.

As to expression, expressed by the venom gland.

Its subcellular location is the secreted. Inhibits preferentially tetrodotoxin-insensitive sodium currents (Nav) on rat cardiac myocytes (IC(50) is 0.26 uM) and has weaker inhibition activity toward tetrodotoxin-sensitive sodium currents on rat dorsal root ganglion (DRG) sensory neurons (IC(50) is 0.83 uM) and on cockroach dorsal unpaired median (DUM) neurons (IC(50) is 1.19 uM). Has no significant effect on potassium currents on DRG neurons. In Chilobrachys guangxiensis (Chinese earth tiger tarantula), this protein is U7-theraphotoxin-Cg1a.